The chain runs to 216 residues: Putative transmembrane protein RNF32-DT (216 aa).

A helical transmembrane segment spans residues 177-197 (WIPLLLVAGCVSCFVGLAVCV).

As to expression, expressed only in testis.

It is found in the cytoplasm. It localises to the membrane. The sequence is that of Putative transmembrane protein RNF32-DT from Homo sapiens (Human).